The following is a 93-amino-acid chain: Chromosomal protein MC1 (93 aa).

Positions 1 to 43 (SNTRNFVLRDEEGNEHGVFTGKQPRQAALKAANRGDGTKSNPD) are disordered.

Its function is as follows. Protects DNA against thermal denaturation and modulates transcription. This chain is Chromosomal protein MC1, found in Methanosarcina barkeri.